Here is a 304-residue protein sequence, read N- to C-terminus: Sulfate adenylyltransferase subunit 2 (304 aa).

The protein belongs to the PAPS reductase family. CysD subfamily. In terms of assembly, heterodimer composed of CysD, the smaller subunit, and CysN.

It catalyses the reaction sulfate + ATP + H(+) = adenosine 5'-phosphosulfate + diphosphate. It functions in the pathway sulfur metabolism; hydrogen sulfide biosynthesis; sulfite from sulfate: step 1/3. In terms of biological role, with CysN forms the ATP sulfurylase (ATPS) that catalyzes the adenylation of sulfate producing adenosine 5'-phosphosulfate (APS) and diphosphate, the first enzymatic step in sulfur assimilation pathway. APS synthesis involves the formation of a high-energy phosphoric-sulfuric acid anhydride bond driven by GTP hydrolysis by CysN coupled to ATP hydrolysis by CysD. The sequence is that of Sulfate adenylyltransferase subunit 2 from Acinetobacter baumannii (strain SDF).